Reading from the N-terminus, the 283-residue chain is Thymidylate synthase (283 aa).

Arginine 22 is a dUMP binding site. The Nucleophile role is filled by cysteine 160. DUMP is bound by residues 180 to 183 (RSCD), asparagine 191, and 221 to 223 (HIY). Residue aspartate 183 coordinates (6R)-5,10-methylene-5,6,7,8-tetrahydrofolate. A (6R)-5,10-methylene-5,6,7,8-tetrahydrofolate-binding site is contributed by serine 282.

Belongs to the thymidylate synthase family. Bacterial-type ThyA subfamily. As to quaternary structure, homodimer.

Its subcellular location is the cytoplasm. It catalyses the reaction dUMP + (6R)-5,10-methylene-5,6,7,8-tetrahydrofolate = 7,8-dihydrofolate + dTMP. It participates in pyrimidine metabolism; dTTP biosynthesis. In terms of biological role, catalyzes the reductive methylation of 2'-deoxyuridine-5'-monophosphate (dUMP) to 2'-deoxythymidine-5'-monophosphate (dTMP) while utilizing 5,10-methylenetetrahydrofolate (mTHF) as the methyl donor and reductant in the reaction, yielding dihydrofolate (DHF) as a by-product. This enzymatic reaction provides an intracellular de novo source of dTMP, an essential precursor for DNA biosynthesis. In Psychromonas ingrahamii (strain DSM 17664 / CCUG 51855 / 37), this protein is Thymidylate synthase.